A 626-amino-acid chain; its full sequence is FAD-binding monooxygenase moxY (626 aa).

Positions 1-23 (MAPFLSAHGESASSSSSSSPTPS) are enriched in low complexity. The tract at residues 1 to 47 (MAPFLSAHGESASSSSSSSPTPSRHTRNQHVDYSTPGSTGYNIPQNT) is disordered. Residues 31–47 (VDYSTPGSTGYNIPQNT) show a composition bias toward polar residues. FAD-binding positions include 96–99 (TWLE), 108–109 (DI), and Tyr-114. 106–108 (GCD) is an NADP(+) binding site. Residues 243–249 (SGASSIQ) and 266–267 (RT) contribute to the NADP(+) site.

It belongs to the FAD-binding monooxygenase family. FAD serves as cofactor.

The protein operates within mycotoxin biosynthesis. Its function is as follows. FAD-binding monooxygenase; part of the fragmented gene cluster that mediates the biosynthesis of dothistromin (DOTH), a polyketide toxin very similar in structure to the aflatoxin precursor, versicolorin B. The first step of the pathway is the conversion of acetate to norsolorinic acid (NOR) and requires the fatty acid synthase subunits hexA and hexB, as well as the polyketide synthase pksA. PksA combines a hexanoyl starter unit and 7 malonyl-CoA extender units to synthesize the precursor NOR. The hexanoyl starter unit is provided to the acyl-carrier protein (ACP) domain by the fungal fatty acid synthase hexA/hexB. The second step is the conversion of NOR to averantin (AVN) and requires the norsolorinic acid ketoreductase nor1, which catalyzes the dehydration of norsolorinic acid to form (1'S)-averantin. The cytochrome P450 monooxygenase avnA then catalyzes the hydroxylation of AVN to 5'hydroxyaverantin (HAVN). The next step is performed by adhA that transforms HAVN to averufin (AVF). Averufin might then be converted to hydroxyversicolorone by cypX and avfA. Hydroxyversicolorone is further converted versiconal hemiacetal acetate (VHA) by moxY. VHA is then the substrate for the versiconal hemiacetal acetate esterase est1 to yield versiconal (VAL). Versicolorin B synthase vbsA then converts VAL to versicolorin B (VERB) by closing the bisfuran ring. Then, the activity of the versicolorin B desaturase verB leads to versicolorin A (VERA). DotB, a predicted chloroperoxidase, may perform epoxidation of the A-ring of VERA. Alternatively, a cytochrome P450, such as cypX or avnA could catalyze this step. It is also possible that another, uncharacterized, cytochrome P450 enzyme is responsible for this step. Opening of the epoxide could potentially be achieved by the epoxide hydrolase epoA. However, epoA seems not to be required for DOTH biosynthesis, but other epoxide hydrolases may have the ability to complement this hydrolysis. Alternatively, opening of the epoxide ring could be achieved non-enzymatically. The next step is the deoxygenation of ring A to yield the 5,8-dihydroxyanthraquinone which is most likely catalyzed by the NADPH dehydrogenase encoded by ver1. The last stages of DOTH biosynthesis are proposed to involve hydroxylation of the bisfuran. OrdB and norB might have oxidative roles here. An alternative possibility is that cytochrome P450 monoogenases such as avnA and cypX might perform these steps in addition to previously proposed steps. The chain is FAD-binding monooxygenase moxY from Dothistroma septosporum (Red band needle blight fungus).